The sequence spans 460 residues: Putative E3 ubiquitin-protein ligase RING1b (460 aa).

The segment at 1-85 is disordered; it reads MPSLKSFSAA…SQSSSAGELS (85 aa). A compositionally biased stretch (basic and acidic residues) spans 21-31; the sequence is SEAERFNPEAV. Acidic residues-rich tracts occupy residues 32 to 51 and 59 to 71; these read EKEE…DEED and EAED…EEED. The segment at 103–143 adopts an RING-type zinc-finger fold; the sequence is CSICLGIIRKTRTVMECLHRFCRECIDKSMRLGNNECPTCR. The interval 196–300 is disordered; sequence QVSQRQSKAL…TEQTHQRDSR (105 aa). Residues 220–234 are compositionally biased toward basic residues; it reads RSRRSGGGSRRRRNC. Positions 240 to 249 are enriched in acidic residues; sequence DTSEANDDDD. Positions 250-265 are enriched in basic and acidic residues; sequence QNKRGKDSSSDEPCER. Positions 276 to 290 are enriched in low complexity; it reads SSSNANNNDNCAGNG.

Heterodimer with RING1A. Interacts with CLF. Component of the PRC1-like complex, at least composed of RING1A, RING1B and LHP1.

The protein localises to the nucleus. It catalyses the reaction S-ubiquitinyl-[E2 ubiquitin-conjugating enzyme]-L-cysteine + [acceptor protein]-L-lysine = [E2 ubiquitin-conjugating enzyme]-L-cysteine + N(6)-ubiquitinyl-[acceptor protein]-L-lysine.. Its pathway is protein modification; protein ubiquitination. Its function is as follows. Putative E3 ubiquitin-protein ligase that mediates monoubiquitination of 'Lys-119' of histone H2A (H2AK119ub), thereby playing a central role in histone code and gene regulation. Functionally, as part of the PRC1-like complex, repress class I KNOX gene expression. PcG PRC1 complex maintains the transcriptionally repressive state of many genes, including Hox genes, throughout development. PcG PRC1 complex acts via chromatin remodeling and modification of histones, rendering chromatin heritably changed in its expressibility. The protein is Putative E3 ubiquitin-protein ligase RING1b (RING1B) of Arabidopsis thaliana (Mouse-ear cress).